The primary structure comprises 39 residues: Protein YkiC (39 aa).

A helical membrane pass occupies residues 13–35; the sequence is LLSAKLCNCTQAIMTHIIASFLA.

It is found in the cell inner membrane. This Escherichia coli (strain K12) protein is Protein YkiC.